The chain runs to 507 residues: Chromosomal replication initiator protein DnaA (507 aa).

Residues 1–112 are domain I, interacts with DnaA modulators; it reads MTDDPGSGFT…PATDEADDTT (112 aa). The segment at 99–162 is disordered; sequence RIAPPATDEA…ERPRNTDSAT (64 aa). Positions 113 to 127 are enriched in polar residues; sequence VPPSENPATTSPDTT. The interval 113 to 166 is domain II; it reads VPPSENPATTSPDTTTDNDEIDDSAAARGDNQHSWPSYFTERPRNTDSATAGVT. The domain III, AAA+ region stretch occupies residues 167–383; sequence SLNRRYTFDT…GALIRVTAFA (217 aa). 4 residues coordinate ATP: G211, G213, K214, and T215. A domain IV, binds dsDNA region spans residues 384–507; the sequence is SLNKTPIDKA…TTRIRQRSKR (124 aa).

The protein belongs to the DnaA family. Oligomerizes as a right-handed, spiral filament on DNA at oriC.

Its subcellular location is the cytoplasm. Plays an essential role in the initiation and regulation of chromosomal replication. ATP-DnaA binds to the origin of replication (oriC) to initiate formation of the DNA replication initiation complex once per cell cycle. Binds the DnaA box (a 9 base pair repeat at the origin) and separates the double-stranded (ds)DNA. Forms a right-handed helical filament on oriC DNA; dsDNA binds to the exterior of the filament while single-stranded (ss)DNA is stabiized in the filament's interior. The ATP-DnaA-oriC complex binds and stabilizes one strand of the AT-rich DNA unwinding element (DUE), permitting loading of DNA polymerase. After initiation quickly degrades to an ADP-DnaA complex that is not apt for DNA replication. Binds acidic phospholipids. The chain is Chromosomal replication initiator protein DnaA from Mycobacterium bovis (strain ATCC BAA-935 / AF2122/97).